We begin with the raw amino-acid sequence, 158 residues long: MSETVVESFTLDHTKVKAPYVRVIETQSGPNGGTITNYDLRLTQPNETAIETGGLHTLEHLFAGLVRDEIDGIIDMSPFGCRTGFHVISWVNYDSETLAKVFKKVLEKIASDDITEVPAAEIESCGNYKDHSLHSAKEWAKLILAQGISSDAFERHVV.

Positions 56, 60, and 125 each coordinate Fe cation.

The protein belongs to the LuxS family. Homodimer. Fe cation serves as cofactor.

The catalysed reaction is S-(5-deoxy-D-ribos-5-yl)-L-homocysteine = (S)-4,5-dihydroxypentane-2,3-dione + L-homocysteine. Involved in the synthesis of autoinducer 2 (AI-2) which is secreted by bacteria and is used to communicate both the cell density and the metabolic potential of the environment. The regulation of gene expression in response to changes in cell density is called quorum sensing. Catalyzes the transformation of S-ribosylhomocysteine (RHC) to homocysteine (HC) and 4,5-dihydroxy-2,3-pentadione (DPD). In Leuconostoc citreum (strain KM20), this protein is S-ribosylhomocysteine lyase.